The chain runs to 235 residues: Uridylate kinase (235 aa).

12–15 (KISG) is a binding site for ATP. G54 is a UMP binding site. Positions 55 and 59 each coordinate ATP. Residues D72 and 133–140 (TGNPFFST) each bind UMP. The ATP site is built by Y166 and D169.

The protein belongs to the UMP kinase family. In terms of assembly, homohexamer.

It localises to the cytoplasm. It carries out the reaction UMP + ATP = UDP + ADP. Its pathway is pyrimidine metabolism; CTP biosynthesis via de novo pathway; UDP from UMP (UMPK route): step 1/1. Inhibited by UTP. In terms of biological role, catalyzes the reversible phosphorylation of UMP to UDP. The sequence is that of Uridylate kinase from Acetivibrio thermocellus (strain ATCC 27405 / DSM 1237 / JCM 9322 / NBRC 103400 / NCIMB 10682 / NRRL B-4536 / VPI 7372) (Clostridium thermocellum).